Consider the following 391-residue polypeptide: Nuclear hormone receptor family member nhr-218 (391 aa).

The nuclear receptor DNA-binding region spans 17-93 (PIPCQICTYQ…MGMKAEKIQQ (77 aa)). 2 NR C4-type zinc fingers span residues 20–40 (CQICTYQSHGVNFNVMTCRAC) and 56–76 (CKTRKNDCRIDSTERHFCRLC). In terms of domain architecture, NR LBD spans 146-391 (SRNYSDSPLT…DNFCNLFAMK (246 aa)).

Belongs to the nuclear hormone receptor family.

It localises to the nucleus. Orphan nuclear receptor. The sequence is that of Nuclear hormone receptor family member nhr-218 (nhr-218) from Caenorhabditis elegans.